A 1716-amino-acid polypeptide reads, in one-letter code: Histone-lysine N-methyltransferase SETD1A (1716 aa).

Residues 60–89 (LQDPRCHVRSKARDFSLPVPKFKLDEFYIG) form an interaction with WDR82 region. The region spanning 84 to 172 (DEFYIGQIPL…NIIHAQLDIK (89 aa)) is the RRM domain. Disordered regions lie at residues 194–367 (PTGG…SSYP), 380–499 (TSYP…AQHS), 516–670 (FSFL…PPPH), 849–869 (AKPF…EKMK), 911–1206 (KRKE…SRKV), 1230–1259 (EEVA…GTEV), and 1275–1297 (GLAT…AERP). Residues 222–231 (SDTAAYPAGT) show a composition bias toward low complexity. Polar residues predominate over residues 243-277 (CSQDTNFSSSRQDTPSSFGQFTPQSSQGTPYTSRG). Low complexity-rich tracts occupy residues 278–295 (STPY…TSTS) and 315–357 (STSS…SSAS). Residues 430-440 (SEAPPPEPPEP) are compositionally biased toward pro residues. The span at 441 to 461 (GGGGGGSGGGGGGGGGGGGGA) shows a compositional bias: gly residues. The residue at position 477 (Ser-477) is a Phosphoserine. A compositionally biased stretch (low complexity) spans 477 to 487 (SPARSGSPAPE). Residues 488-499 (TTNESVPFAQHS) show a composition bias toward polar residues. Residues Ser-521 and Ser-578 each carry the phosphoserine modification. Polar residues predominate over residues 581-591 (ANGQNQASPCS). Composition is skewed to pro residues over residues 606–631 (SPPP…PPPY) and 638–670 (GYPP…PPPH). A compositionally biased stretch (basic and acidic residues) spans 859–869 (QAKEEDKEKMK). Residue Ser-930 is modified to Phosphoserine. Composition is skewed to acidic residues over residues 991–1009 (KDED…EEAV) and 1018–1027 (ASDGEDEDSD). Over residues 1028-1071 (SSSQCSLYADSDGENGSTSDSESGSSSSSSSSSSSSSSSSSSES) the composition is skewed to low complexity. At Ser-1110 the chain carries Phosphoserine. Over residues 1130–1150 (EEPPPSVPQPPAEPPAGPPDA) the composition is skewed to pro residues. The segment covering 1283-1292 (DDSEATETSD) has biased composition (acidic residues). Positions 1307 to 1311 (EHNYA) match the HCFC1-binding motif (HBM) motif. Disordered regions lie at residues 1355 to 1427 (EEPK…FEPR) and 1480 to 1508 (TNLS…SEGY). Over residues 1369 to 1383 (EGEEEEEDEEEESES) the composition is skewed to acidic residues. A compositionally biased stretch (basic residues) spans 1399-1412 (RRRSLRSHTRRRRP). The segment covering 1413–1424 (PLPPPPPPPPSF) has biased composition (pro residues). Positions 1424–1459 (FEPRSEFEQMTILYDIWNSGLDLEDMSYLRLTYERL) are interaction with CFP1. Residues 1459 to 1546 (LLQQTSGADW…GTNRVLSERR (88 aa)) are interaction with ASH2L, RBBP5 and WDR5. The short motif at 1501-1506 (GSARSE) is the WDR5 interaction motif (WIN) element. The RxxxRR motif motif lies at 1546–1551 (RSEQRR). Residues 1577 to 1694 (KKLRFGRSRI…VDEEITYDYK (118 aa)) form the SET domain. Tyr-1693 is an S-adenosyl-L-methionine binding site. Positions 1700 to 1716 (NKIPCLCGTESCRGSLN) constitute a Post-SET domain.

It belongs to the class V-like SAM-binding methyltransferase superfamily. In terms of assembly, component of the SET1A/COMPASS complex composed of the catalytic subunit SETD1A, WDR5, WDR82, RBBP5, ASH2L/ASH2, CXXC1/CFP1, HCFC1 and DPY30 homotrimer. Forms a core complex with the evolutionary conserved subcomplex WRAD composed of WDR5, RBBP5, ASH2L/ASH2 and DPY30 subunits; WRAD differentially stimulates the methyltransferase activity. Interacts with BOD1L1 (via COMPASS-Shg1 domain) at replication forks. Interacts with HCFC1. Interacts with ASH2/ASH2L. Interacts with CXXC1/CFP1. Interacts with RBBP5. Interacts (via N-terminal region) with WDR82; the interaction is direct. Interacts (via the RRM domain) with hyperphosphorylated C-terminal domain (CTD) of RNA polymerase II large subunit (POLR2A) only in the presence of WDR82. Binds specifically to CTD heptad repeats phosphorylated on 'Ser-5' of each heptad. Interacts with ZNF335. Interacts with SUPT6H. Interacts with NAP1L1. Interacts (via WIN motif) with WDR5.

Its subcellular location is the nucleus. The protein localises to the nucleus speckle. The protein resides in the chromosome. It localises to the cytoplasm. It carries out the reaction L-lysyl(4)-[histone H3] + S-adenosyl-L-methionine = N(6)-methyl-L-lysyl(4)-[histone H3] + S-adenosyl-L-homocysteine + H(+). The enzyme catalyses N(6)-methyl-L-lysyl(4)-[histone H3] + S-adenosyl-L-methionine = N(6),N(6)-dimethyl-L-lysyl(4)-[histone H3] + S-adenosyl-L-homocysteine + H(+). It catalyses the reaction N(6),N(6)-dimethyl-L-lysyl(4)-[histone H3] + S-adenosyl-L-methionine = N(6),N(6),N(6)-trimethyl-L-lysyl(4)-[histone H3] + S-adenosyl-L-homocysteine + H(+). Histone methyltransferase that catalyzes methyl group transfer from S-adenosyl-L-methionine to the epsilon-amino group of 'Lys-4' of histone H3 (H3K4) via a non-processive mechanism. Part of chromatin remodeling machinery, forms H3K4me1, H3K4me2 and H3K4me3 methylation marks at active chromatin sites where transcription and DNA repair take place. Responsible for H3K4me3 enriched promoters and transcriptional programming of inner mass stem cells and neuron progenitors during embryogenesis. Required for H3K4me1 mark at stalled replication forks. Mediates FANCD2-dependent nucleosome remodeling and RAD51 nucleofilaments stabilization at reversed forks, protecting them from nucleolytic degradation. Does not methylate 'Lys-4' of histone H3 if the neighboring 'Lys-9' residue is already methylated. Has RNA binding activity towards transcripts involved in RNA processing and the DNA damage response. This Mus musculus (Mouse) protein is Histone-lysine N-methyltransferase SETD1A (Setd1a).